The primary structure comprises 879 residues: Alanine--tRNA ligase (879 aa).

Residues H566, H570, C668, and H672 each coordinate Zn(2+).

It belongs to the class-II aminoacyl-tRNA synthetase family. Zn(2+) serves as cofactor.

Its subcellular location is the cytoplasm. The enzyme catalyses tRNA(Ala) + L-alanine + ATP = L-alanyl-tRNA(Ala) + AMP + diphosphate. Functionally, catalyzes the attachment of alanine to tRNA(Ala) in a two-step reaction: alanine is first activated by ATP to form Ala-AMP and then transferred to the acceptor end of tRNA(Ala). Also edits incorrectly charged Ser-tRNA(Ala) and Gly-tRNA(Ala) via its editing domain. The sequence is that of Alanine--tRNA ligase from Clostridium perfringens (strain 13 / Type A).